Consider the following 189-residue polypeptide: ATP synthase subunit b (189 aa).

The helical transmembrane segment at 23–43 threads the bilayer; the sequence is IEIVLSLVVFGLLLFAVWKFV.

It belongs to the ATPase B chain family. F-type ATPases have 2 components, F(1) - the catalytic core - and F(0) - the membrane proton channel. F(1) has five subunits: alpha(3), beta(3), gamma(1), delta(1), epsilon(1). F(0) has three main subunits: a(1), b(2) and c(10-14). The alpha and beta chains form an alternating ring which encloses part of the gamma chain. F(1) is attached to F(0) by a central stalk formed by the gamma and epsilon chains, while a peripheral stalk is formed by the delta and b chains.

Its subcellular location is the cell membrane. Its function is as follows. F(1)F(0) ATP synthase produces ATP from ADP in the presence of a proton or sodium gradient. F-type ATPases consist of two structural domains, F(1) containing the extramembraneous catalytic core and F(0) containing the membrane proton channel, linked together by a central stalk and a peripheral stalk. During catalysis, ATP synthesis in the catalytic domain of F(1) is coupled via a rotary mechanism of the central stalk subunits to proton translocation. Component of the F(0) channel, it forms part of the peripheral stalk, linking F(1) to F(0). In Nocardioides sp. (strain ATCC BAA-499 / JS614), this protein is ATP synthase subunit b.